The chain runs to 294 residues: uncharacterized protein (294 aa).

Disordered stretches follow at residues 1–30, 51–86, and 250–294; these read MKRQ…EVSH, ALSD…KKRP, and DELN…STST. 3 stretches are compositionally biased toward polar residues: residues 7–26, 66–81, and 255–277; these read QDSM…TPTK, PYSS…NSST, and PMNN…NLPT.

Its subcellular location is the nucleus. This is an uncharacterized protein from Schizosaccharomyces pombe (strain 972 / ATCC 24843) (Fission yeast).